The sequence spans 366 residues: Type 2A phosphatase-associated protein 42 (366 aa).

Residues 318-366 (RVLQGGEEPEQAPDEENMDWQDRETYKAREWDEFKESHAKGSGNTMNRG) are disordered. Over residues 324-336 (EEPEQAPDEENMD) the composition is skewed to acidic residues. A compositionally biased stretch (basic and acidic residues) spans 337 to 356 (WQDRETYKAREWDEFKESHA).

The protein belongs to the IGBP1/TAP42 family. In terms of assembly, associates with the PP2a (PPH21 and PPH22) and SIT4 protein phosphatase catalytic subunits. Interacts with PPG1, PPH3 and TIP41. Post-translationally, phosphorylated by TOR kinases. Dephosphorylated by CDC55, TPD3 and SIT4.

In terms of biological role, involved in negative regulation of the TOR signaling pathway in response to type of available nitrogen source. Inhibitor of PP2A phosphatase SIT4, which results in inhibition of nuclear export of MSN2, due to lack of dephosphorylation by SIT4. Also required for rapamycin induced activation of expression of many nitrogen discrimination pathway (NDP) genes. In complex with PPH21, required for organization of the actin cytoskeletom during the cell cycle via a Rho GTPase-dependent mechanism. The protein is Type 2A phosphatase-associated protein 42 (TAP42) of Saccharomyces cerevisiae (strain ATCC 204508 / S288c) (Baker's yeast).